The following is a 202-amino-acid chain: MADDLDDLLDEVESKFCCNTSESKQTSRVMKHTDQKCDNLEERKLPRKQGRKRVENEIDIDAMLHEILDDDVDTPTSTHEPSPAKASSSAQTISKKCCPVFLGGSSVAHGIGTSVSERACNRLRCTYCDFSVITFDDHEWDSSCDYLFFRNNMPDYHKLKVHLRRRAGVRAYACQCSWISILTLSHLREQPQLKWVCGKHRA.

Residues 71–90 (DVDTPTSTHEPSPAKASSSA) form a disordered region. Residues 74–90 (TPTSTHEPSPAKASSSA) show a composition bias toward polar residues.

As to expression, ubiquitously expressed during early development and in adult tissues including the eye, brain, heart and kidney.

The protein resides in the cytoplasm. Its subcellular location is the photoreceptor inner segment. Functionally, may be involved in photoreceptor outer segment disk morphogenesis. The chain is Cilia- and flagella-associated protein 418 (cfap418) from Danio rerio (Zebrafish).